The following is a 190-amino-acid chain: uncharacterized protein (190 aa).

Over 1–16 the chain is Cytoplasmic; the sequence is MAILPEFISQTPPVTR. Residues 17–37 form a helical membrane-spanning segment; it reads YIVLGTLFTTLAVNFGYVSDL. At 38-55 the chain is on the lumenal side; that stretch reads KIFFNWKLFLAKGEYWRA. Residues 56–76 form a helical membrane-spanning segment; sequence ITTFLYVGPFGLELILYLSFL. Topologically, residues 77-98 are cytoplasmic; it reads LRFMSMLERSSPPPQTQSFLKT. Residues 99–119 form a helical membrane-spanning segment; that stretch reads VLIVWFSLLVTSYFSYMPFAA. Over 120–138 the chain is Lumenal; it reads SYFSFTMLYIWSWKHPLYR. The chain crosses the membrane as a helical span at residues 139–159; it reads ISILGLFDVKAPYVPWVMVLL. Over 160-163 the chain is Cytoplasmic; sequence RWLR. A helical transmembrane segment spans residues 164–184; that stretch reads TGIFPLLDLISALIGHVYFFV. At 185–190 the chain is on the lumenal side; sequence TDFSTV.

This sequence belongs to the derlin family.

The protein resides in the endoplasmic reticulum membrane. This is an uncharacterized protein from Schizosaccharomyces pombe (strain 972 / ATCC 24843) (Fission yeast).